The primary structure comprises 1679 residues: Lysophospholipase NTE1 (1679 aa).

Low complexity predominate over residues 1-20 (MRSMNCTTNNTNNTGQNTKN). Residues 1 to 21 (MRSMNCTTNNTNNTGQNTKNS) form a disordered region. At 1–49 (MRSMNCTTNNTNNTGQNTKNSLGSSFNSSNYTSYRFQTCLTDQIISEAQ) the chain is on the cytoplasmic side. The chain crosses the membrane as a helical span at residues 50-70 (TWSLSSLFNFSWVVSYFVMGA). Over 71 to 103 (SRMIFRYGWYLATLSLLRIPKWIFFKLHHVQFT) the chain is Lumenal. A helical transmembrane segment spans residues 104-124 (LSFWLILFALAVIVFVTYTIM). Residues 125-1679 (KERILSQYKR…EFLLHRRNSI (1555 aa)) lie on the Cytoplasmic side of the membrane. Basic and acidic residues predominate over residues 261–274 (SDKDHGDETDHSDT). Residues 261-304 (SDKDHGDETDHSDTDGLDDQDRDEEDEEEDDDIDNYDTKSCSSN) form a disordered region. Over residues 275-295 (DGLDDQDRDEEDEEEDDDIDN) the composition is skewed to acidic residues. Ser300 and Ser312 each carry phosphoserine. Disordered regions lie at residues 498–527 (SSGS…KPSD) and 586–672 (DILS…VSPR). Polar residues-rich tracts occupy residues 592-606 (PIHN…GINT) and 630-652 (FSSL…LDNT). 7 positions are modified to phosphoserine: Ser632, Ser634, Ser653, Ser661, Ser670, Ser680, and Ser739. Residues 775–800 (KEYTISNKRHNKSKSQDKKKPRAYKE) are disordered. Residues 788-800 (KSQDKKKPRAYKE) show a composition bias toward basic and acidic residues. Residue Thr803 is modified to Phosphothreonine. A nucleoside 3',5'-cyclic phosphate-binding positions include 803–947 (TPNL…LTKL) and 943–1074 (SLTK…VAKK). Residues 855–882 (SSSVVSSMSKPEQVSAQSSHKGENPHHT) form a disordered region. Residues 862-873 (MSKPEQVSAQSS) are compositionally biased toward polar residues. A PNPLA domain is found at 1373-1537 (LVLGGGGARG…VDNLPVTEMR (165 aa)). The GXGXXG signature appears at 1377 to 1382 (GGGARG). Positions 1404-1408 (GTSIG) match the GXSXG motif. Ser1406 acts as the Nucleophile in catalysis. The active-site Proton acceptor is Asp1524. The DGA/G motif lies at 1524–1526 (DGG).

It belongs to the NTE family.

It is found in the endoplasmic reticulum membrane. Its subcellular location is the lipid droplet. It catalyses the reaction a 1-acyl-sn-glycero-3-phosphocholine + H2O = sn-glycerol 3-phosphocholine + a fatty acid + H(+). The enzyme catalyses a 1,2-diacyl-sn-glycero-3-phosphocholine + 2 H2O = sn-glycerol 3-phosphocholine + 2 a carboxylate + 2 H(+). With respect to regulation, positively regulated by SEC14. Inhibited by organophosphorus esters in the order phenyl saligenin phosphate (PSP) &gt; phenyldipentyl phosphinate (PDPP) = diisopropyl fluorophosphate (DFP) &gt; and paraoxon (PXN). Intracellular phospholipase B that catalyzes the double deacylation of phosphatidylcholine (PC) to glycerophosphocholine (GroPCho). Plays an important role in membrane lipid homeostasis. Responsible for the rapid PC turnover in response to inositol, elevated temperatures, or when choline is present in the growth medium. NTE1 activity impacts the repressing transcriptional activity of OPI1, the main regulator of phospholipid synthesis gene transcription. In Saccharomyces cerevisiae (strain ATCC 204508 / S288c) (Baker's yeast), this protein is Lysophospholipase NTE1 (NTE1).